Consider the following 206-residue polypeptide: Peptidyl-tRNA hydrolase (206 aa).

TRNA is bound at residue tyrosine 19. Catalysis depends on histidine 24, which acts as the Proton acceptor. The tRNA site is built by tyrosine 70, asparagine 72, and asparagine 118.

Belongs to the PTH family. As to quaternary structure, monomer.

It localises to the cytoplasm. The catalysed reaction is an N-acyl-L-alpha-aminoacyl-tRNA + H2O = an N-acyl-L-amino acid + a tRNA + H(+). Functionally, hydrolyzes ribosome-free peptidyl-tRNAs (with 1 or more amino acids incorporated), which drop off the ribosome during protein synthesis, or as a result of ribosome stalling. Its function is as follows. Catalyzes the release of premature peptidyl moieties from peptidyl-tRNA molecules trapped in stalled 50S ribosomal subunits, and thus maintains levels of free tRNAs and 50S ribosomes. The polypeptide is Peptidyl-tRNA hydrolase (Prochlorococcus marinus (strain MIT 9303)).